A 101-amino-acid chain; its full sequence is MGIKVKVEFLGGLDVISNGVREHKCEVPLEEGEATMIDLIKYITATIISDPKDVPVFIEEGTVRPGILVLINDTDWELEGMEDYVVESGDVLTFTSTLHGG.

Gly101 is subject to 1-thioglycine. Residue Gly101 forms a Glycyl lysine isopeptide (Gly-Lys) (interchain with K-? in acceptor proteins) linkage.

This sequence belongs to the URM1 family. C-terminal thiocarboxylation occurs in 2 steps, it is first acyl-adenylated (-COAMP) via the hesA/moeB/thiF part of UBA4, then thiocarboxylated (-COSH) via the rhodanese domain of UBA4.

The protein resides in the cytoplasm. Its pathway is tRNA modification; 5-methoxycarbonylmethyl-2-thiouridine-tRNA biosynthesis. In terms of biological role, acts as a sulfur carrier required for 2-thiolation of mcm(5)S(2)U at tRNA wobble positions of cytosolic tRNA(Lys), tRNA(Glu) and tRNA(Gln). Serves as sulfur donor in tRNA 2-thiolation reaction by being thiocarboxylated (-COSH) at its C-terminus by the MOCS3 homolog UBA4. The sulfur is then transferred to tRNA to form 2-thiolation of mcm(5)S(2)U. Prior mcm(5) tRNA modification by the elongator complex is required for 2-thiolation. Also acts as a ubiquitin-like protein (UBL) that is covalently conjugated via an isopeptide bond to lysine residues of target proteins such as AHP1. The thiocarboxylated form serves as substrate for conjugation and oxidative stress specifically induces the formation of UBL-protein conjugates. The chain is Ubiquitin-related modifier 1 from Debaryomyces hansenii (strain ATCC 36239 / CBS 767 / BCRC 21394 / JCM 1990 / NBRC 0083 / IGC 2968) (Yeast).